We begin with the raw amino-acid sequence, 25 residues long: ATP synthase subunit alpha, mitochondrial (25 aa).

It belongs to the ATPase alpha/beta chains family. As to quaternary structure, F-type ATPases have 2 components, CF(1) - the catalytic core - and CF(0) - the membrane proton channel. CF(1) has five subunits: alpha(3), beta(3), gamma(1), delta(1), epsilon(1). CF(0) has three main subunits: a, b and c.

Its subcellular location is the mitochondrion. It localises to the mitochondrion inner membrane. Its function is as follows. Mitochondrial membrane ATP synthase (F(1)F(0) ATP synthase or Complex V) produces ATP from ADP in the presence of a proton gradient across the membrane which is generated by electron transport complexes of the respiratory chain. F-type ATPases consist of two structural domains, F(1) - containing the extramembraneous catalytic core, and F(0) - containing the membrane proton channel, linked together by a central stalk and a peripheral stalk. During catalysis, ATP synthesis in the catalytic domain of F(1) is coupled via a rotary mechanism of the central stalk subunits to proton translocation. Subunits alpha and beta form the catalytic core in F(1). Rotation of the central stalk against the surrounding alpha(3)beta(3) subunits leads to hydrolysis of ATP in three separate catalytic sites on the beta subunits. Subunit alpha does not bear the catalytic high-affinity ATP-binding sites. The sequence is that of ATP synthase subunit alpha, mitochondrial (ATPA) from Spinacia oleracea (Spinach).